Consider the following 211-residue polypeptide: Protein-L-isoaspartate O-methyltransferase (211 aa).

The active site involves S60.

The protein belongs to the methyltransferase superfamily. L-isoaspartyl/D-aspartyl protein methyltransferase family.

It localises to the cytoplasm. The catalysed reaction is [protein]-L-isoaspartate + S-adenosyl-L-methionine = [protein]-L-isoaspartate alpha-methyl ester + S-adenosyl-L-homocysteine. Its function is as follows. Catalyzes the methyl esterification of L-isoaspartyl residues in peptides and proteins that result from spontaneous decomposition of normal L-aspartyl and L-asparaginyl residues. It plays a role in the repair and/or degradation of damaged proteins. This chain is Protein-L-isoaspartate O-methyltransferase, found in Pseudomonas fluorescens (strain SBW25).